A 311-amino-acid polypeptide reads, in one-letter code: L-lactate dehydrogenase (311 aa).

Residues Val12, Asp33, Lys38, Tyr63, and 77–78 (GA) contribute to the NAD(+) site. Residues Gln80, Arg86, and 118–121 (NPVD) each bind substrate. Residues 116–118 (VTN) and Ser141 each bind NAD(+). Residue 146-149 (DSAR) coordinates substrate. Residues Arg151 and His166 each coordinate beta-D-fructose 1,6-bisphosphate. The active-site Proton acceptor is His173. At Tyr219 the chain carries Phosphotyrosine. Thr228 contacts substrate.

The protein belongs to the LDH/MDH superfamily. LDH family. Homotetramer.

The protein localises to the cytoplasm. It catalyses the reaction (S)-lactate + NAD(+) = pyruvate + NADH + H(+). It functions in the pathway fermentation; pyruvate fermentation to lactate; (S)-lactate from pyruvate: step 1/1. Its activity is regulated as follows. Allosterically activated by fructose 1,6-bisphosphate (FBP). In terms of biological role, catalyzes the conversion of lactate to pyruvate. The protein is L-lactate dehydrogenase of Thermoanaerobacter pseudethanolicus (strain ATCC 33223 / 39E) (Clostridium thermohydrosulfuricum).